We begin with the raw amino-acid sequence, 859 residues long: MVSIAFYGGIPGGISTPITQQSEKSKCEENTMFQPYCYNNDSKNSMAESKEARDQEMNLKEESKEEKRRNDWWKIGMFLLCLAGTTGGILWWYEGLPQQHYIGLVAIGGRLNGSGQSNAIECWGSFPGCRPFQNYFSYETNRSMHMDNNTATLLEAYHREITFIYKSSCTDSDHCQEYQCKKVNLNSSASSNSVRVEDVTNTAEYWGFKWLECNQTENFKTILVPENEMVNINDTDTWIPKGCNETWARVKRCPIDILYGIHPIRLCVQPPFFLVQEKGIADTSRIGNCGPTIFLGVLEDNKGVVRGDYTACNVRRLNINRKDYTGIYQVPIFYTCTFTNITSCNSKPIISVIMYETNQVQYLLCNNNNSNNYNCVVQSFGVIGQAHLELPRPNKRIRNQSFNQYNCSINNKTELETWKLVKTSGVTPLPISSEANTGLIRHKRDFGISAIVAAIVAATAIAASATMSYVALTEVNKIMEVQNHTFEVENSTLNGMDLIERQIKILYAMILQTHADVQLLKERQQVEETFNLIGCIERTHVFCHTGHPWNMSWGHLNESTQWDDWVSKMEDLNQEILTTLHGARNNLAQSMITFNTPDSIAQFGKDLWSHIGNWIPGLGASIIKYIVMFLLIYLLLTSSPKILRALWKVTSGAGSSGSRYLKKKFHHKHASREDTWDQAQHNIHLAGVTGGSGDKYYKQKYSRNDWNGESEEYNRRPKSWVKSIEAFGESYISEKTKGEISQPGAAINEHKNGSGGNNPHQGSLDLEIRSEGGNIYDCCIKAQEGTLAIPCCGFPLWLFWGLVIIVGRIAGYGLRGLAVIIRICIRGLNLIFEIIRKMLDYIGRALNPGTSHVSMPQYV.

The propeptide occupies 1 to 6 (MVSIAF). The Extracellular segment spans residues 7 to 614 (YGGIPGGIST…KDLWSHIGNW (608 aa)). Residues Asn-40, Asn-112, Asn-141, Asn-148, Asn-186, Asn-214, Asn-233, Asn-244, Asn-340, Asn-368, Asn-399, Asn-406, and Asn-411 are each glycosylated (N-linked (GlcNAc...) asparagine; by host). The tract at residues 446-466 (FGISAIVAAIVAATAIAASAT) is fusion peptide. 2 N-linked (GlcNAc...) asparagine; by host glycosylation sites follow: Asn-483 and Asn-490. Residues 498 to 513 (LIERQIKILYAMILQT) form an immunosuppression region. Asn-550 and Asn-557 each carry an N-linked (GlcNAc...) asparagine; by host glycan. Coiled-coil stretches lie at residues 576–624 (ILTT…SIIK) and 663–699 (KKFH…YYKQ). A helical transmembrane segment spans residues 615-635 (IPGLGASIIKYIVMFLLIYLL). Residues 636–859 (LTSSPKILRA…TSHVSMPQYV (224 aa)) are Cytoplasmic-facing.

As to quaternary structure, the mature envelope protein (Env) consists of a trimer of SU-TM heterodimers attached by noncovalent interactions or by a labile interchain disulfide bond. Specific enzymatic cleavages in vivo yield mature proteins. Envelope glycoproteins are synthesized as an inactive precursor that is N-glycosylated and processed likely by host cell furin or by a furin-like protease in the Golgi to yield the mature SU and TM proteins. The cleavage site between SU and TM requires the minimal sequence [KR]-X-[KR]-R.

It is found in the virion membrane. The protein resides in the host cell membrane. Its function is as follows. The surface protein (SU) attaches the virus to the host cell by binding to its receptor. This interaction triggers the refolding of the transmembrane protein (TM) and is thought to activate its fusogenic potential by unmasking its fusion peptide. Fusion occurs at the host cell plasma membrane. In terms of biological role, the transmembrane protein (TM) acts as a class I viral fusion protein. Under the current model, the protein has at least 3 conformational states: pre-fusion native state, pre-hairpin intermediate state, and post-fusion hairpin state. During viral and target cell membrane fusion, the coiled coil regions (heptad repeats) assume a trimer-of-hairpins structure, positioning the fusion peptide in close proximity to the C-terminal region of the ectodomain. The formation of this structure appears to drive apposition and subsequent fusion of viral and target cell membranes. Membranes fusion leads to delivery of the nucleocapsid into the cytoplasm. The protein is Envelope glycoprotein (env) of Equus asinus (Donkey).